The chain runs to 1462 residues: uncharacterized protein (1462 aa).

The helical transmembrane segment at 119–139 (TGYITSLCLSAILKFFSFRII) threads the bilayer. Phosphoserine is present on residues S411 and S420. Residues 541 to 730 (TLIESKKRKA…SEIYKAIKEN (190 aa)) enclose the SEC7 domain. Residues 1102–1139 (ENSEDWGLFSKLCNLLNDKNIVVRNQSLSLFHQLVNKY) form an HEAT repeat.

The protein localises to the cytoplasm. It localises to the golgi apparatus membrane. This is an uncharacterized protein from Schizosaccharomyces pombe (strain 972 / ATCC 24843) (Fission yeast).